A 509-amino-acid chain; its full sequence is ATP synthase subunit alpha (509 aa).

169 to 176 (GDRQTGKT) contributes to the ATP binding site.

It belongs to the ATPase alpha/beta chains family. In terms of assembly, F-type ATPases have 2 components, CF(1) - the catalytic core - and CF(0) - the membrane proton channel. CF(1) has five subunits: alpha(3), beta(3), gamma(1), delta(1), epsilon(1). CF(0) has three main subunits: a(1), b(2) and c(9-12). The alpha and beta chains form an alternating ring which encloses part of the gamma chain. CF(1) is attached to CF(0) by a central stalk formed by the gamma and epsilon chains, while a peripheral stalk is formed by the delta and b chains.

The protein localises to the cell inner membrane. It carries out the reaction ATP + H2O + 4 H(+)(in) = ADP + phosphate + 5 H(+)(out). In terms of biological role, produces ATP from ADP in the presence of a proton gradient across the membrane. The alpha chain is a regulatory subunit. This is ATP synthase subunit alpha from Rhizobium etli (strain CIAT 652).